We begin with the raw amino-acid sequence, 124 residues long: MLFLTQVREVVVSEVNIPLSFSDAAATRVQTLIAEEENPDLKLRVYITGGGCSGFQYGFTFDEKVNDGDTTIVNSGVTLVVDPMSLQYLMGGMVDYTEGLEGARFFVNNPNATTTCGCGASFSV.

3 residues coordinate iron-sulfur cluster: Cys52, Cys116, and Cys118.

It belongs to the HesB/IscA family. As to quaternary structure, homodimer. Iron-sulfur cluster serves as cofactor.

Required for insertion of 4Fe-4S clusters for at least IspG. This is Iron-sulfur cluster insertion protein ErpA from Vibrio atlanticus (strain LGP32) (Vibrio splendidus (strain Mel32)).